Reading from the N-terminus, the 364-residue chain is Autophagy-related protein 14 (364 aa).

The interval 5–20 (CPICETQSHVFYCAHC) is cysteine repeats. Residues 38–114 (LGKINNALRN…QDRRIKEKSR (77 aa)) are a coiled coil.

It belongs to the ATG14 family. Component of the autophagy-specific VPS34 PI3-kinase complex I composed of VPS15, VPS30, VPS34, ATG14 and ATG38. Interacts directly with ATG38.

Its subcellular location is the preautophagosomal structure membrane. The protein localises to the vacuole membrane. In terms of biological role, required for cytoplasm to vacuole transport (Cvt) and autophagy as a part of the autophagy-specific VPS34 PI3-kinase complex I. This complex is essential to recruit the ATG8-phosphatidylinositol conjugate and the ATG12-ATG5 conjugate to the pre-autophagosomal structure. ATG14 mediates the specific binding of the VPS34 PI3-kinase complex I to the preautophagosomal structure (PAS). Required for survival and/or proliferation in kidneys and in brain. The sequence is that of Autophagy-related protein 14 from Candida glabrata (strain ATCC 2001 / BCRC 20586 / JCM 3761 / NBRC 0622 / NRRL Y-65 / CBS 138) (Yeast).